We begin with the raw amino-acid sequence, 410 residues long: MGCTVSRRRTTTAEASSAWGIFGFYRPRSPSPPPQRLSLPLTVMDCPICLDVAATEAQTLPCMHKFCLDCIQRWTLTSTACPLCNARVTSILHHVDSDASFVETPVEGATDVDGEEDEPVGGGFAVIWGEDYTEEVRHEEAEGQGSGSGSRARPRVPVFNWLYGQVSTVIESDPIREAVVDNIVEIIQEHGMNRQRVTEAMLPMFGANTHALVDTLFDISAQWMRRMQRRAPMSHQGVNYIDTSESEAHSDSEVSSPDEEDSGASSSGVHTEDLTEASESADDQRPAPRRSPRRARRAAVLRREQRRTRCLRRGRTGGQAQGETPEAPSSGEGSSAQHGASGAGAGPGSANTAASARSSPSSSPSSSMRRPSPSASAPETAAPRGGPPASSSSGSPRSATIFIDLTQDDD.

An RING-type zinc finger spans residues 46-85 (CPICLDVAATEAQTLPCMHKFCLDCIQRWTLTSTACPLCN). A disordered region spans residues 243–410 (TSESEAHSDS…IFIDLTQDDD (168 aa)). The segment covering 287-315 (APRRSPRRARRAAVLRREQRRTRCLRRGR) has biased composition (basic residues). Low complexity-rich tracts occupy residues 329–340 (SSGEGSSAQHGA) and 348–399 (GSAN…PRSA).

Auto-ubiquitinated.

It catalyses the reaction S-ubiquitinyl-[E2 ubiquitin-conjugating enzyme]-L-cysteine + [acceptor protein]-L-lysine = [E2 ubiquitin-conjugating enzyme]-L-cysteine + N(6)-ubiquitinyl-[acceptor protein]-L-lysine.. Functionally, evades nuclear antiviral defenses triggered by dsDNA viruses. Acts during the initial stages of lytic infection and the reactivation of latent viral genome. Prevents the antiviral effect of nuclear bodies by degrading host PML and SP100. The polypeptide is E3 ubiquitin-protein ligase ICP0 (EP0) (Sus scrofa (Pig)).